A 522-amino-acid polypeptide reads, in one-letter code: Zinc finger protein 329 (522 aa).

Residue serine 30 is modified to Phosphoserine. 12 C2H2-type zinc fingers span residues 184–206, 212–234, 240–262, 268–290, 296–318, 324–346, 352–374, 380–402, 408–430, 436–458, 464–486, and 492–514; these read YKCA…HRTH, YTCN…RRIH, YKCS…QRIH, YACL…QRTH, YRCN…LRIH, YECS…ERTH, FECV…QKIH, YECK…QRVH, YGCN…QRIH, YECN…QRIH, YQCL…QRLH, and SQCP…QRTH.

Belongs to the krueppel C2H2-type zinc-finger protein family.

Its subcellular location is the nucleus. Its function is as follows. May be involved in transcriptional regulation. The chain is Zinc finger protein 329 (Znf329) from Mus musculus (Mouse).